The primary structure comprises 296 residues: 4-hydroxy-tetrahydrodipicolinate synthase (296 aa).

Position 49 (threonine 49) interacts with pyruvate. The Proton donor/acceptor role is filled by tyrosine 137. Lysine 165 acts as the Schiff-base intermediate with substrate in catalysis. Residue isoleucine 207 participates in pyruvate binding.

The protein belongs to the DapA family. Homotetramer; dimer of dimers.

It localises to the cytoplasm. It catalyses the reaction L-aspartate 4-semialdehyde + pyruvate = (2S,4S)-4-hydroxy-2,3,4,5-tetrahydrodipicolinate + H2O + H(+). The protein operates within amino-acid biosynthesis; L-lysine biosynthesis via DAP pathway; (S)-tetrahydrodipicolinate from L-aspartate: step 3/4. Functionally, catalyzes the condensation of (S)-aspartate-beta-semialdehyde [(S)-ASA] and pyruvate to 4-hydroxy-tetrahydrodipicolinate (HTPA). In Afipia carboxidovorans (strain ATCC 49405 / DSM 1227 / KCTC 32145 / OM5) (Oligotropha carboxidovorans), this protein is 4-hydroxy-tetrahydrodipicolinate synthase.